Here is a 489-residue protein sequence, read N- to C-terminus: WPP domain-interacting protein 1 (489 aa).

The tract at residues 49 to 73 (SNSVELGKPMSFDSPGDGGGAYSPV) is disordered. 3 consecutive short sequence motifs (nuclear localization signal) follow at residues 80–81 (RK), 83–84 (RR), and 104–105 (KR). The segment at 195–264 (PMISSGQGGN…DDAGGEGGES (70 aa)) is disordered. Residues 215-224 (GESVDFEKEN) show a composition bias toward basic and acidic residues. Residues 323–446 (EIVTLVNNVE…QDLQNDCIEI (124 aa)) adopt a coiled-coil conformation. Residues 459 to 489 (SYVLIQLVLLSTVVLLLLSQLLPEPDTVVPT) enclose the KASH domain. A helical membrane pass occupies residues 460-480 (YVLIQLVLLSTVVLLLLSQLL).

Homodimer and heterodimer with WIP2. Component of Ran complexes at least composed of WIT1 or WIT2, RANGAP1 or RANGAP2, and WIP1 or WIP2 or WIP3. Interacts with RANGAP1, RANGAP2, WPP1/MAF1, and WPP2/MAF2. Interacts with SUN1 and SUN2. Interacts with KIN1. Core component of the LINC complex which is composed of inner nuclear membrane SUN domain-containing proteins coupled to outer nuclear membrane WIP and WIT proteins. The LINC complex also involves nucleoskeletal proteins CRWN/LINC and possibly KAKU4 and the cytoskeletal myosin KAKU1. Interacts with WIT1 and SUN2. Interacts with WIT2. Interacts with SUN3. In terms of tissue distribution, expressed in seedlings, roots, stems, leaves, and flowers.

The protein localises to the nucleus envelope. It is found in the nucleus membrane. Its function is as follows. Mediates and enhances the nuclear envelope docking of RANGAP proteins mediated by WIT1 and WIT2 in the undifferentiated cells of root tips. As component of the SUN-WIP-WIT2-KAKU1 complex, mediates the transfer of cytoplasmic forces to the nuclear envelope (NE), leading to nuclear shape changes. In Arabidopsis thaliana (Mouse-ear cress), this protein is WPP domain-interacting protein 1 (WIP1).